Here is a 137-residue protein sequence, read N- to C-terminus: Large ribosomal subunit protein uL16c (137 aa).

It belongs to the universal ribosomal protein uL16 family. As to quaternary structure, part of the 50S ribosomal subunit.

It is found in the plastid. The protein localises to the chloroplast. This Hordeum vulgare (Barley) protein is Large ribosomal subunit protein uL16c.